A 230-amino-acid chain; its full sequence is Orotidine 5'-phosphate decarboxylase (230 aa).

Substrate is bound by residues aspartate 8, lysine 30, 59 to 68 (DLKLYDIPNT), threonine 118, arginine 178, glutamine 187, glycine 207, and arginine 208. Lysine 61 (proton donor) is an active-site residue.

The protein belongs to the OMP decarboxylase family. Type 1 subfamily. As to quaternary structure, homodimer.

The enzyme catalyses orotidine 5'-phosphate + H(+) = UMP + CO2. The protein operates within pyrimidine metabolism; UMP biosynthesis via de novo pathway; UMP from orotate: step 2/2. In terms of biological role, catalyzes the decarboxylation of orotidine 5'-monophosphate (OMP) to uridine 5'-monophosphate (UMP). The polypeptide is Orotidine 5'-phosphate decarboxylase (Sulfurovum sp. (strain NBC37-1)).